Reading from the N-terminus, the 354-residue chain is UDP-N-acetylglucosamine--N-acetylmuramyl-(pentapeptide) pyrophosphoryl-undecaprenol N-acetylglucosamine transferase (354 aa).

Residues T15–G17, N127, R163, S191, I244, A263–E268, and Q288 contribute to the UDP-N-acetyl-alpha-D-glucosamine site.

This sequence belongs to the glycosyltransferase 28 family. MurG subfamily.

It is found in the cell inner membrane. The enzyme catalyses di-trans,octa-cis-undecaprenyl diphospho-N-acetyl-alpha-D-muramoyl-L-alanyl-D-glutamyl-meso-2,6-diaminopimeloyl-D-alanyl-D-alanine + UDP-N-acetyl-alpha-D-glucosamine = di-trans,octa-cis-undecaprenyl diphospho-[N-acetyl-alpha-D-glucosaminyl-(1-&gt;4)]-N-acetyl-alpha-D-muramoyl-L-alanyl-D-glutamyl-meso-2,6-diaminopimeloyl-D-alanyl-D-alanine + UDP + H(+). Its pathway is cell wall biogenesis; peptidoglycan biosynthesis. Its function is as follows. Cell wall formation. Catalyzes the transfer of a GlcNAc subunit on undecaprenyl-pyrophosphoryl-MurNAc-pentapeptide (lipid intermediate I) to form undecaprenyl-pyrophosphoryl-MurNAc-(pentapeptide)GlcNAc (lipid intermediate II). This chain is UDP-N-acetylglucosamine--N-acetylmuramyl-(pentapeptide) pyrophosphoryl-undecaprenol N-acetylglucosamine transferase, found in Serratia proteamaculans (strain 568).